Here is a 318-residue protein sequence, read N- to C-terminus: Glutathione synthetase (318 aa).

The region spanning Lys128–Ala313 is the ATP-grasp domain. Leu154–Gly210 serves as a coordination point for ATP. Positions 284 and 286 each coordinate Mg(2+).

Belongs to the prokaryotic GSH synthase family. It depends on Mg(2+) as a cofactor. The cofactor is Mn(2+).

The enzyme catalyses gamma-L-glutamyl-L-cysteine + glycine + ATP = glutathione + ADP + phosphate + H(+). It functions in the pathway sulfur metabolism; glutathione biosynthesis; glutathione from L-cysteine and L-glutamate: step 2/2. The chain is Glutathione synthetase from Neisseria meningitidis serogroup A / serotype 4A (strain DSM 15465 / Z2491).